We begin with the raw amino-acid sequence, 330 residues long: Phenylalanine--tRNA ligase alpha subunit (330 aa).

Glu-246 lines the Mg(2+) pocket.

The protein belongs to the class-II aminoacyl-tRNA synthetase family. Phe-tRNA synthetase alpha subunit type 1 subfamily. Tetramer of two alpha and two beta subunits. It depends on Mg(2+) as a cofactor.

It localises to the cytoplasm. It catalyses the reaction tRNA(Phe) + L-phenylalanine + ATP = L-phenylalanyl-tRNA(Phe) + AMP + diphosphate + H(+). This is Phenylalanine--tRNA ligase alpha subunit from Sulfurimonas denitrificans (strain ATCC 33889 / DSM 1251) (Thiomicrospira denitrificans (strain ATCC 33889 / DSM 1251)).